A 371-amino-acid chain; its full sequence is tRNA-specific 2-thiouridylase MnmA (371 aa).

Residues 13–20 and M39 contribute to the ATP site; that span reads GMSGGVDS. The interval 99–101 is interaction with target base in tRNA; it reads NPD. Catalysis depends on C104, which acts as the Nucleophile. A disulfide bond links C104 and C200. G128 contacts ATP. The segment at 150–152 is interaction with tRNA; sequence KDQ. The active-site Cysteine persulfide intermediate is the C200. The interaction with tRNA stretch occupies residues 308–309; that stretch reads RY.

Belongs to the MnmA/TRMU family.

It localises to the cytoplasm. The catalysed reaction is S-sulfanyl-L-cysteinyl-[protein] + uridine(34) in tRNA + AH2 + ATP = 2-thiouridine(34) in tRNA + L-cysteinyl-[protein] + A + AMP + diphosphate + H(+). Catalyzes the 2-thiolation of uridine at the wobble position (U34) of tRNA, leading to the formation of s(2)U34. This is tRNA-specific 2-thiouridylase MnmA from Listeria monocytogenes serotype 4b (strain CLIP80459).